The following is a 1260-amino-acid chain: MINSNDKNESDTFGIIRKILSERIMVLDGAMGTEIQKFKLKDNDYRGEEFKDFPHELGGNNDLLSLTQPHIIREIHCKYLEAGADFIETNTFNGNIFSQADYKMEHLVKRINIESARLAKSACEEYTKKDPSRPRFVCGAVGPTNKTASISPSVERPEARNVLFDELVSGYLEQVEALVEGGIDVILVETVFDSLNCKAALFAIEEFFKTYSPRLPVFVSGTIVDKSGRTLSGQTGEAFYTSVASANLMVFGLNCALGAQEMRPFLQNISKCSECYVSCYPNAGLPNTFGGYDETPEMMAEQIKEFAESGLLNIVGGCCGTSPDHIRAFCNAIEGIAPRAIPTLVPNTTLSGLEPLVFTKELNFVNVGERCNVSGSRRFANLIKANKYEEALSVARQQVEAGAQIIDINMDEGMIDAVAAIQKFLFFIGSEPEISKVPIMLDSSNFDVVEAGLKCVQGKCIVNSISLKVGEELFIKQAKIVKQYGASVVVMAFDENGQATSKEEKVRICYRSYKILTEQVGFYPQDIIFDPNILTIATGLEEHNNYGVEFIEATREIKALMPLTRVSGGVSNLSFSFRGNEPLREAMHSAFLYYAIAAGMDMGIVNAGALPIYDDIPKDLLKLVEDAILNRTNDATEKLLEYAQANNKSEKANVEVEEWRNKPVSERIAHALVKGITTYIIEDTEEARNTLPSSLSVIEGPLMGGMNVVGDLFGAGKMFLPQVIKSARVMKKAVAHLIPFMEEEKRLKRLEKGNDEAAEDEPDNAGVVVLATVKGDVHDIGKNIVGVVLGCNNYKVIDIGVMTPCEKIVEAIIANKADVVGLSGLITPSLDEMIYVASELERLKFKIPLMIGGATTSQIHTAVKISPHYSQPTVHVLDASRSVTVVQSLLDPNNKEVFAEDVSQQYAELREKHYASLKDRKYTSLEKARQHCVKVNWKTIQPVKPTFLGTQVFKEYSLEKLVTKIDWNPFFVTWQLRGKYPNRGYPRIFNDETVGAEAKKLFDDAQTMLKEIVDKKLLNARGVIGFYPANSIDEDIIIYDHNDDETRSKPIATLFGLRQQNEKETDEPYIAIGDYIAPVSSGVKDYIGLFAVSSGFGLEDMVEKYKKENDDYSSIMAKALADRLAEALAEAVHEDVRREHWAYEKDQALSNEDLFKIKYKGIRPAPGYPAQPDHTEMKTIWSLMNVNENTSIELTDHMAMLPGAAVCGVYFSHEHAKYFSVGKITKEQIESYASRKQITKEEAERWLSSILSYDRLPLVK.

Positions 13 to 333 (FGIIRKILSE…DHIRAFCNAI (321 aa)) constitute a Hcy-binding domain. Residues cysteine 255, cysteine 318, and cysteine 319 each contribute to the Zn(2+) site. Residues 364-625 (FVNVGERCNV…IPKDLLKLVE (262 aa)) form the Pterin-binding domain. The B12-binding N-terminal domain maps to 655–749 (EVEEWRNKPV…FMEEEKRLKR (95 aa)). Residues glutamate 699, 775-779 (GDVHD), histidine 778, serine 823, threonine 827, and alanine 879 each bind methylcob(III)alamin. One can recognise a B12-binding domain in the interval 766-883 (GVVVLATVKG…VHVLDASRSV (118 aa)). In terms of domain architecture, AdoMet activation spans 916-1256 (SLKDRKYTSL…LSSILSYDRL (341 aa)). S-adenosyl-L-methionine-binding positions include aspartate 966, arginine 1163, and 1218 to 1219 (YF).

Belongs to the vitamin-B12 dependent methionine synthase family. Methylcob(III)alamin serves as cofactor. The cofactor is Zn(2+).

It catalyses the reaction (6S)-5-methyl-5,6,7,8-tetrahydrofolate + L-homocysteine = (6S)-5,6,7,8-tetrahydrofolate + L-methionine. It functions in the pathway amino-acid biosynthesis; L-methionine biosynthesis via de novo pathway; L-methionine from L-homocysteine (MetH route): step 1/1. Catalyzes the transfer of a methyl group from methyl-cobalamin to homocysteine, yielding enzyme-bound cob(I)alamin and methionine. Subsequently, remethylates the cofactor using methyltetrahydrofolate. The polypeptide is Methionine synthase (mtr) (Dictyostelium discoideum (Social amoeba)).